Reading from the N-terminus, the 161-residue chain is DNA-binding protein inhibitor ID-4 (161 aa).

Positions 52 to 104 (AAEAAADEPALCLQCDMNDCYSRLRRLVPTIPPNKKVSKVEILQHVIDYILDL) constitute a bHLH domain.

In terms of assembly, heterodimer with other HLH proteins.

It localises to the nucleus. Its function is as follows. Transcriptional regulator (lacking a basic DNA binding domain) which negatively regulates the basic helix-loop-helix (bHLH) transcription factors by forming heterodimers and inhibiting their DNA binding and transcriptional activity. Implicated in regulating a variety of cellular processes, including cellular growth, senescence, differentiation, apoptosis, angiogenesis, and neoplastic transformation. The polypeptide is DNA-binding protein inhibitor ID-4 (Id4) (Mus musculus (Mouse)).